We begin with the raw amino-acid sequence, 276 residues long: Glutamate 5-kinase (276 aa).

ATP is bound at residue Lys-14. Residues Ser-54, Asp-141, and Asn-157 each coordinate substrate. Residues 177–178 (SD) and 219–225 (TGGMLTK) contribute to the ATP site.

It belongs to the glutamate 5-kinase family.

The protein localises to the cytoplasm. The enzyme catalyses L-glutamate + ATP = L-glutamyl 5-phosphate + ADP. The protein operates within amino-acid biosynthesis; L-proline biosynthesis; L-glutamate 5-semialdehyde from L-glutamate: step 1/2. Functionally, catalyzes the transfer of a phosphate group to glutamate to form L-glutamate 5-phosphate. The sequence is that of Glutamate 5-kinase from Listeria monocytogenes serotype 4b (strain CLIP80459).